A 233-amino-acid polypeptide reads, in one-letter code: Homeobox protein Hox-D4a (233 aa).

Residues 124 to 129 (VYPWMK) carry the Antp-type hexapeptide motif. Positions 145–204 (PKRSRTAYTRQQVLELEKEFHFNRYLTRRRRIEIAHTLCLSERQIKIWFQNRRMKWTKDH) form a DNA-binding region, homeobox. The segment at 203 to 233 (DHKLPNTKGRSAPASSHLQSIHKDQTDITSL) is disordered. Residues 223–233 (IHKDQTDITSL) are compositionally biased toward basic and acidic residues.

This sequence belongs to the Antp homeobox family. Deformed subfamily.

The protein localises to the nucleus. Its function is as follows. Sequence-specific transcription factor which is part of a developmental regulatory system that provides cells with specific positional identities on the anterior-posterior axis. This Takifugu rubripes (Japanese pufferfish) protein is Homeobox protein Hox-D4a (hoxd4a).